Here is a 153-residue protein sequence, read N- to C-terminus: Histone H2B.10 (153 aa).

2 stretches are compositionally biased toward basic and acidic residues: residues 1–28 (MAPK…EKAL) and 36–53 (EKRL…EGKK). Residues 1 to 61 (MAPKAEKKPA…KKAGRKKAKK (61 aa)) form a disordered region. K7 and K37 each carry N6-acetyllysine. K149 participates in a covalent cross-link: Glycyl lysine isopeptide (Lys-Gly) (interchain with G-Cter in ubiquitin).

The protein belongs to the histone H2B family. In terms of assembly, the nucleosome is a histone octamer containing two molecules each of H2A, H2B, H3 and H4 assembled in one H3-H4 heterotetramer and two H2A-H2B heterodimers. The octamer wraps approximately 147 bp of DNA. In terms of processing, can be acetylated to form H2BK6ac and H2BK33ac. Post-translationally, monoubiquitinated by BRE1 to form H2BK143ub1 and deubiquitinated by UBP26. Required for heterochromatic histone H3 di- and trimethylation at H3K4me. May give a specific tag for epigenetic transcriptional activation.

It localises to the nucleus. The protein localises to the chromosome. In terms of biological role, core component of nucleosome. Nucleosomes wrap and compact DNA into chromatin, limiting DNA accessibility to the cellular machineries which require DNA as a template. Histones thereby play a central role in transcription regulation, DNA repair, DNA replication and chromosomal stability. DNA accessibility is regulated via a complex set of post-translational modifications of histones, also called histone code, and nucleosome remodeling. The sequence is that of Histone H2B.10 (H2B.10) from Oryza sativa subsp. japonica (Rice).